Reading from the N-terminus, the 356-residue chain is Histidinol-phosphate aminotransferase (356 aa).

Lys214 is subject to N6-(pyridoxal phosphate)lysine.

Belongs to the class-II pyridoxal-phosphate-dependent aminotransferase family. Histidinol-phosphate aminotransferase subfamily. Homodimer. Requires pyridoxal 5'-phosphate as cofactor.

The catalysed reaction is L-histidinol phosphate + 2-oxoglutarate = 3-(imidazol-4-yl)-2-oxopropyl phosphate + L-glutamate. It participates in amino-acid biosynthesis; L-histidine biosynthesis; L-histidine from 5-phospho-alpha-D-ribose 1-diphosphate: step 7/9. This is Histidinol-phosphate aminotransferase from Shigella dysenteriae serotype 1 (strain Sd197).